Consider the following 691-residue polypeptide: L-type lectin-domain containing receptor kinase S.6 (691 aa).

The first 25 residues, 1–25 (MNHHHYSLVIFHLILFLSLDFPTLS), serve as a signal peptide directing secretion. Over 26–311 (HRFSPPLQNL…VVGLKIPVWS (286 aa)) the chain is Extracellular. The interval 27 to 257 (RFSPPLQNLT…LHIVERWKFR (231 aa)) is legume-lectin like. 2 N-linked (GlcNAc...) asparagine glycosylation sites follow: N34 and N89. The helical transmembrane segment at 312-332 (LLPGLAAIVILVAFIVFSLIC) threads the bilayer. Topologically, residues 333–691 (GKKRISEEAD…PWMTPKSHFS (359 aa)) are cytoplasmic. The Protein kinase domain occupies 366–653 (FNENAIVGQG…IRGEAPLPVL (288 aa)). ATP is bound by residues 372–380 (VGQGASATV) and K394. The active-site Proton acceptor is the D500.

In the C-terminal section; belongs to the protein kinase superfamily. Ser/Thr protein kinase family. This sequence in the N-terminal section; belongs to the leguminous lectin family.

It is found in the cell membrane. The catalysed reaction is L-seryl-[protein] + ATP = O-phospho-L-seryl-[protein] + ADP + H(+). It carries out the reaction L-threonyl-[protein] + ATP = O-phospho-L-threonyl-[protein] + ADP + H(+). Functionally, involved in resistance response to the pathogenic oomycetes Phytophthora infestans and Phytophthora capsici and to the pathogenic bacteria Pseudomonas syringae. This chain is L-type lectin-domain containing receptor kinase S.6, found in Arabidopsis thaliana (Mouse-ear cress).